We begin with the raw amino-acid sequence, 1252 residues long: ATP-dependent helicase/nuclease subunit A (1252 aa).

Positions 6-489 (TNWTEEQKEA…VLLYKNFRSR (484 aa)) constitute a UvrD-like helicase ATP-binding domain. 27–34 (AAAGSGKT) is a binding site for ATP. In terms of domain architecture, UvrD-like helicase C-terminal spans 523–811 (ANYEEIEENL…RIMSIHKSKG (289 aa)).

The protein belongs to the helicase family. AddA subfamily. In terms of assembly, heterodimer of AddA and AddB/RexB. Mg(2+) is required as a cofactor.

The enzyme catalyses Couples ATP hydrolysis with the unwinding of duplex DNA by translocating in the 3'-5' direction.. The catalysed reaction is ATP + H2O = ADP + phosphate + H(+). Functionally, the heterodimer acts as both an ATP-dependent DNA helicase and an ATP-dependent, dual-direction single-stranded exonuclease. Recognizes the chi site generating a DNA molecule suitable for the initiation of homologous recombination. The AddA nuclease domain is required for chi fragment generation; this subunit has the helicase and 3' -&gt; 5' nuclease activities. The protein is ATP-dependent helicase/nuclease subunit A of Clostridium acetobutylicum (strain ATCC 824 / DSM 792 / JCM 1419 / IAM 19013 / LMG 5710 / NBRC 13948 / NRRL B-527 / VKM B-1787 / 2291 / W).